The primary structure comprises 132 residues: Acyl-CoA thioester hydrolase YciA (132 aa).

A HotDog ACOT-type domain is found at 8–123; that stretch reads PQGDLVLRTL…LFKYVAVDPE (116 aa).

This sequence belongs to the acyl coenzyme A hydrolase family.

Functionally, catalyzes the hydrolysis of the thioester bond in palmitoyl-CoA and malonyl-CoA. This chain is Acyl-CoA thioester hydrolase YciA (yciA), found in Escherichia coli O6:H1 (strain CFT073 / ATCC 700928 / UPEC).